A 426-amino-acid chain; its full sequence is Serine--tRNA ligase (426 aa).

235–237 serves as a coordination point for L-serine; that stretch reads TAE. 266–268 contributes to the ATP binding site; that stretch reads RRE. L-serine is bound at residue glutamate 289. 353–356 contacts ATP; it reads EISS. Serine 389 is an L-serine binding site.

The protein belongs to the class-II aminoacyl-tRNA synthetase family. Type-1 seryl-tRNA synthetase subfamily. Homodimer. The tRNA molecule binds across the dimer.

It localises to the cytoplasm. The catalysed reaction is tRNA(Ser) + L-serine + ATP = L-seryl-tRNA(Ser) + AMP + diphosphate + H(+). It catalyses the reaction tRNA(Sec) + L-serine + ATP = L-seryl-tRNA(Sec) + AMP + diphosphate + H(+). Its pathway is aminoacyl-tRNA biosynthesis; selenocysteinyl-tRNA(Sec) biosynthesis; L-seryl-tRNA(Sec) from L-serine and tRNA(Sec): step 1/1. Functionally, catalyzes the attachment of serine to tRNA(Ser). Is also able to aminoacylate tRNA(Sec) with serine, to form the misacylated tRNA L-seryl-tRNA(Sec), which will be further converted into selenocysteinyl-tRNA(Sec). In Nostoc sp. (strain PCC 7120 / SAG 25.82 / UTEX 2576), this protein is Serine--tRNA ligase.